We begin with the raw amino-acid sequence, 61 residues long: Metallothionein-2 (61 aa).

An N-acetylmethionine modification is found at Met1. Residues 1 to 29 (MDPNCSCVAGDSCTCAGSCKCKECKCTSC) are beta. Positions 5, 7, 13, 15, 19, 21, 24, 26, 29, 33, 34, 36, 37, 41, 44, 48, 50, 57, 59, and 60 each coordinate a divalent metal cation. The segment at 20 to 25 (KCKECK) is antigenic epitope. An alpha region spans residues 30-61 (KKSCCSCCPVGCAKCAQGCICKGASDKCNCCA).

The protein belongs to the metallothionein superfamily. Type 1 family.

Functionally, metallothioneins have a high content of cysteine residues that bind various heavy metals; these proteins are transcriptionally regulated by both heavy metals and glucocorticoids. This is Metallothionein-2 (MT2) from Macaca fascicularis (Crab-eating macaque).